A 1201-amino-acid chain; its full sequence is Transcription-repair-coupling factor (1201 aa).

A disordered region spans residues 1 to 27; the sequence is MRLLITLGPSGSTHGHSLHTDAGRRRG. The 162-residue stretch at 670–831 folds into the Helicase ATP-binding domain; that stretch reads DMQKPEPMDR…MSGVRDMSII (162 aa). Residue 683 to 690 coordinates ATP; sequence GDVGYGKT. A DEEQ box motif is present at residues 784-787; it reads DEEQ. Residues 852–1006 enclose the Helicase C-terminal domain; that stretch reads VVKEAIEREV…GFSIASHDLE (155 aa).

The protein in the N-terminal section; belongs to the UvrB family. In the C-terminal section; belongs to the helicase family. RecG subfamily.

The protein resides in the cytoplasm. In terms of biological role, couples transcription and DNA repair by recognizing RNA polymerase (RNAP) stalled at DNA lesions. Mediates ATP-dependent release of RNAP and its truncated transcript from the DNA, and recruitment of nucleotide excision repair machinery to the damaged site. This is Transcription-repair-coupling factor from Myxococcus xanthus.